The chain runs to 162 residues: NADPH-dependent 7-cyano-7-deazaguanine reductase (162 aa).

Cysteine 53 (thioimide intermediate) is an active-site residue. Aspartate 60 (proton donor) is an active-site residue. Residues 75–77 (VES) and 94–95 (HE) contribute to the substrate site.

It belongs to the GTP cyclohydrolase I family. QueF type 1 subfamily.

It localises to the cytoplasm. The enzyme catalyses 7-aminomethyl-7-carbaguanine + 2 NADP(+) = 7-cyano-7-deazaguanine + 2 NADPH + 3 H(+). The protein operates within tRNA modification; tRNA-queuosine biosynthesis. Catalyzes the NADPH-dependent reduction of 7-cyano-7-deazaguanine (preQ0) to 7-aminomethyl-7-deazaguanine (preQ1). This chain is NADPH-dependent 7-cyano-7-deazaguanine reductase, found in Exiguobacterium sibiricum (strain DSM 17290 / CCUG 55495 / CIP 109462 / JCM 13490 / 255-15).